The chain runs to 196 residues: Pyridoxal 5'-phosphate synthase subunit PdxT (196 aa).

Residue 47 to 49 (GES) participates in L-glutamine binding. C79 acts as the Nucleophile in catalysis. L-glutamine-binding positions include R106 and 134–135 (IR). Catalysis depends on charge relay system residues H170 and E172.

The protein belongs to the glutaminase PdxT/SNO family. As to quaternary structure, in the presence of PdxS, forms a dodecamer of heterodimers. Only shows activity in the heterodimer.

It catalyses the reaction aldehydo-D-ribose 5-phosphate + D-glyceraldehyde 3-phosphate + L-glutamine = pyridoxal 5'-phosphate + L-glutamate + phosphate + 3 H2O + H(+). The enzyme catalyses L-glutamine + H2O = L-glutamate + NH4(+). The protein operates within cofactor biosynthesis; pyridoxal 5'-phosphate biosynthesis. Functionally, catalyzes the hydrolysis of glutamine to glutamate and ammonia as part of the biosynthesis of pyridoxal 5'-phosphate. The resulting ammonia molecule is channeled to the active site of PdxS. The chain is Pyridoxal 5'-phosphate synthase subunit PdxT from Bacillus anthracis (strain A0248).